A 1128-amino-acid polypeptide reads, in one-letter code: Large proline-rich protein BAG6 (1128 aa).

Met-1 is modified (N-acetylmethionine). The region spanning 17-92 (LEVLVKTLDS…HLVERAPPQT (76 aa)) is the Ubiquitin-like domain. Disordered stretches follow at residues 87-126 (RAPP…SVHD), 185-267 (CRGG…NHPS), 380-435 (VTMT…AASH), 456-523 (IQDS…ALPG), and 555-598 (PGMA…SASD). Residues 95 to 108 (PSGASSGTGSASAT) show a composition bias toward low complexity. At Ser-96 the chain carries Phosphoserine. At Thr-117 the chain carries Phosphothreonine. Polar residues predominate over residues 189–201 (SQAQHSQPPSQMP). Repeat 1 spans residues 236–265 (RASAQSPGLSPSGPAPAGPTPAPETNAPNH). Residues 236-630 (RASAQSPGLS…MTSPTITVAM (395 aa)) form a 4 X 29 AA approximate repeats region. Over residues 238 to 247 (SAQSPGLSPS) the composition is skewed to low complexity. 2 stretches are compositionally biased toward pro residues: residues 248 to 257 (GPAPAGPTPA) and 388 to 402 (RPPP…PPGP). Residues 403–412 (GQASSLAPSS) are compositionally biased toward low complexity. Repeat unit 2 spans residues 410–438 (PSSTTVESSTEGAPPPGPAPPPAASHPRV). Pro residues-rich tracts occupy residues 422-433 (APPPGPAPPPAA) and 502-515 (PTPP…PGGP). Over residues 564–581 (ATASASAGTTNTATTAGP) the composition is skewed to low complexity. 2 tandem repeats follow at residues 569–596 (SAGT…QPSA) and 602–630 (SQLL…TVAM). A compositionally biased stretch (pro residues) spans 583–594 (PGGPAQPPPPQP). Disordered stretches follow at residues 648–689 (QTAA…GLGP) and 939–1128 (VGDP…AEDP). A compositionally biased stretch (pro residues) spans 652–677 (PPAPPPPPPPPPPAPEQQTAPPPGSP). Positions 678–688 (PGGAGSPGGLG) are enriched in gly residues. A phosphoserine mark is found at Ser-960 and Ser-969. Residues 999–1016 (AAAETEPWAAAVPPEWVP) are compositionally biased toward low complexity. The tract at residues 1006–1036 (WAAAVPPEWVPIIQQDIQSQRKVKPQPPLSD) is required for interaction with GET4. Residues 1008–1050 (AAVPPEWVPIIQQDIQSQRKVKPQPPLSDAYLSGMPAKRRKTM) carry the Nuclear localization site motif. The sufficient for the delivery of client proteins to the endoplasmic reticulum stretch occupies residues 1018–1128 (IQQDIQSQRK…NAHRAFAEDP (111 aa)). A Phosphothreonine modification is found at Thr-1049. The tract at residues 1054–1111 (GPQLLLSEAVSRAAKAAGARPLTSPESLSRDLEAPEVQESYRQQLRADIQKRLQEDPN) is BAG-similar domain, required and sufficient for interaction with UBL4A. Residues 1062–1072 (AVSRAAKAAGA) show a composition bias toward low complexity. Residues Ser-1077 and Ser-1113 each carry the phosphoserine modification.

As to quaternary structure, component of the BAG6/BAT3 complex, also named BAT3 complex, at least composed of BAG6, UBL4A and GET4/TRC35. Interacts with GET4; the interaction is direct and localizes BAG6 in the cytosol. Interacts with UBL4A; the interaction is direct and required for UBL4A protein stability. Interacts with AIFM1. Interacts with HSPA2. Interacts with CTCFL. Interacts with p300/EP300. Interacts (via ubiquitin-like domain) with RNF126; required for BAG6-dependent ubiquitination of proteins mislocalized to the cytosol. Interacts (via ubiquitin-like domain) with SGTA; SGTA competes with RNF126 by binding the same region of BAG6, thereby promoting deubiquitination of BAG6-target proteins and rescuing them from degradation. Interacts with ricin A chain. Interacts with VCP and AMFR; both form the VCP/p97-AMFR/gp78 complex. Interacts with SYVN1. Interacts with USP13; the interaction is direct and may mediate UBL4A deubiquitination. Interacts with ZFAND2B. Interacts with KPNA2. Interacts with UBQLN4. In terms of processing, ricin can induce a cleavage by the caspase CASP3. The released C-terminal peptide induces apoptosis.

The protein localises to the cytoplasm. It is found in the cytosol. It localises to the nucleus. The protein resides in the secreted. Its subcellular location is the extracellular exosome. Functionally, ATP-independent molecular chaperone preventing the aggregation of misfolded and hydrophobic patches-containing proteins. Functions as part of a cytosolic protein quality control complex, the BAG6/BAT3 complex, which maintains these client proteins in a soluble state and participates in their proper delivery to the endoplasmic reticulum or alternatively can promote their sorting to the proteasome where they undergo degradation. The BAG6/BAT3 complex is involved in the post-translational delivery of tail-anchored/type II transmembrane proteins to the endoplasmic reticulum membrane. Recruited to ribosomes, it interacts with the transmembrane region of newly synthesized tail-anchored proteins and together with SGTA and ASNA1 mediates their delivery to the endoplasmic reticulum. Client proteins that cannot be properly delivered to the endoplasmic reticulum are ubiquitinated by RNF126, an E3 ubiquitin-protein ligase associated with BAG6 and are sorted to the proteasome. SGTA which prevents the recruitment of RNF126 to BAG6 may negatively regulate the ubiquitination and the proteasomal degradation of client proteins. Similarly, the BAG6/BAT3 complex also functions as a sorting platform for proteins of the secretory pathway that are mislocalized to the cytosol either delivering them to the proteasome for degradation or to the endoplasmic reticulum. The BAG6/BAT3 complex also plays a role in the endoplasmic reticulum-associated degradation (ERAD), a quality control mechanism that eliminates unwanted proteins of the endoplasmic reticulum through their retrotranslocation to the cytosol and their targeting to the proteasome. It maintains these retrotranslocated proteins in an unfolded yet soluble state condition in the cytosol to ensure their proper delivery to the proteasome. BAG6 is also required for selective ubiquitin-mediated degradation of defective nascent chain polypeptides by the proteasome. In this context, it may participate in the production of antigenic peptides and play a role in antigen presentation in immune response. BAG6 is also involved in endoplasmic reticulum stress-induced pre-emptive quality control, a mechanism that selectively attenuates the translocation of newly synthesized proteins into the endoplasmic reticulum and reroutes them to the cytosol for proteasomal degradation. BAG6 may ensure the proper degradation of these proteins and thereby protects the endoplasmic reticulum from protein overload upon stress. By inhibiting the polyubiquitination and subsequent proteasomal degradation of HSPA2 it may also play a role in the assembly of the synaptonemal complex during spermatogenesis. Also positively regulates apoptosis by interacting with and stabilizing the proapoptotic factor AIFM1. By controlling the steady-state expression of the IGF1R receptor, indirectly regulates the insulin-like growth factor receptor signaling pathway. Its function is as follows. Involved in DNA damage-induced apoptosis: following DNA damage, accumulates in the nucleus and forms a complex with p300/EP300, enhancing p300/EP300-mediated p53/TP53 acetylation leading to increase p53/TP53 transcriptional activity. When nuclear, may also act as a component of some chromatin regulator complex that regulates histone 3 'Lys-4' dimethylation (H3K4me2). In terms of biological role, released extracellularly via exosomes, it is a ligand of the natural killer/NK cells receptor NCR3 and stimulates NK cells cytotoxicity. It may thereby trigger NK cells cytotoxicity against neighboring tumor cells and immature myeloid dendritic cells (DC). May mediate ricin-induced apoptosis. This chain is Large proline-rich protein BAG6, found in Sus scrofa (Pig).